Reading from the N-terminus, the 283-residue chain is MEMO1 family protein DKAM_1357 (283 aa).

Belongs to the MEMO1 family.

The polypeptide is MEMO1 family protein DKAM_1357 (Desulfurococcus amylolyticus (strain DSM 18924 / JCM 16383 / VKM B-2413 / 1221n) (Desulfurococcus kamchatkensis)).